The chain runs to 99 residues: Aspartyl/glutamyl-tRNA(Asn/Gln) amidotransferase subunit C (99 aa).

This sequence belongs to the GatC family. As to quaternary structure, heterotrimer of A, B and C subunits.

The catalysed reaction is L-glutamyl-tRNA(Gln) + L-glutamine + ATP + H2O = L-glutaminyl-tRNA(Gln) + L-glutamate + ADP + phosphate + H(+). It carries out the reaction L-aspartyl-tRNA(Asn) + L-glutamine + ATP + H2O = L-asparaginyl-tRNA(Asn) + L-glutamate + ADP + phosphate + 2 H(+). In terms of biological role, allows the formation of correctly charged Asn-tRNA(Asn) or Gln-tRNA(Gln) through the transamidation of misacylated Asp-tRNA(Asn) or Glu-tRNA(Gln) in organisms which lack either or both of asparaginyl-tRNA or glutaminyl-tRNA synthetases. The reaction takes place in the presence of glutamine and ATP through an activated phospho-Asp-tRNA(Asn) or phospho-Glu-tRNA(Gln). This chain is Aspartyl/glutamyl-tRNA(Asn/Gln) amidotransferase subunit C, found in Paraburkholderia phymatum (strain DSM 17167 / CIP 108236 / LMG 21445 / STM815) (Burkholderia phymatum).